The primary structure comprises 871 residues: Protein pob1 (871 aa).

The region spanning 2-65 is the SH3 domain; it reads ASQRFVIALH…PASHVELISD (64 aa). The interval 42 to 168 is disordered; it reads WWEGEDEQGN…PSSDLSNFNT (127 aa). The span at 62–80 shows a compositional bias: basic and acidic residues; the sequence is LISDERSDSSDSRRGKEDF. Low complexity-rich tracts occupy residues 88-100 and 109-124; these read TRSSLSSSRSTSS and LYSNNSLSSSHSSILN. Over residues 131 to 168 the composition is skewed to polar residues; it reads SKPSVPSNFNSMFPSSKQEGPSPLLDNQPSSDLSNFNT. A phosphoserine mark is found at S224 and S225. Position 229 is a phosphotyrosine (Y229). S241 is subject to Phosphoserine. The 64-residue stretch at 250 to 313 folds into the SAM domain; sequence WSTEEVVEWL…LRKIQQLKDS (64 aa). A compositionally biased stretch (low complexity) spans 329 to 343; the sequence is ISVSQSSDSSSSIPK. Disordered regions lie at residues 329–371 and 384–670; these read ISVS…NRPT and PDLD…KSKR. Composition is skewed to polar residues over residues 384–395 and 404–451; these read PDLDSSPSTDWN and TPSS…NSGL. Phosphoserine is present on residues S433, S439, and S440. T442 is subject to Phosphothreonine. A Phosphoserine modification is found at S444. A compositionally biased stretch (low complexity) spans 456-467; the sequence is TEPISSPSTSSI. Residues 492 to 511 show a composition bias toward polar residues; that stretch reads QPSSNVPTKFTGGASESSSV. S549 carries the post-translational modification Phosphoserine. The span at 549–560 shows a compositional bias: low complexity; sequence SPSSISSRLPSS. Polar residues-rich tracts occupy residues 561–574 and 583–606; these read NLEQGSSSSVTKSP and KASSPVTSKGVSINEKSAVNNYAT. In terms of domain architecture, PH spans 698–808; the sequence is TADCHGWMRK…WSSAFLKATV (111 aa).

The protein resides in the cytoplasm. Its subcellular location is the membrane. Its function is as follows. Has a role in cell elongation and separation. The polypeptide is Protein pob1 (pob1) (Schizosaccharomyces pombe (strain 972 / ATCC 24843) (Fission yeast)).